Reading from the N-terminus, the 337-residue chain is DNA-directed RNA polymerase subunit alpha (337 aa).

The tract at residues 1 to 233 (MVREEIAEST…DLFVPFLHAE (233 aa)) is alpha N-terminal domain (alpha-NTD). The interval 266–337 (GIPLKYIFID…FAVDLPKVLI (72 aa)) is alpha C-terminal domain (alpha-CTD).

It belongs to the RNA polymerase alpha chain family. As to quaternary structure, in plastids the minimal PEP RNA polymerase catalytic core is composed of four subunits: alpha, beta, beta', and beta''. When a (nuclear-encoded) sigma factor is associated with the core the holoenzyme is formed, which can initiate transcription.

It is found in the plastid. The protein localises to the chloroplast. It catalyses the reaction RNA(n) + a ribonucleoside 5'-triphosphate = RNA(n+1) + diphosphate. Functionally, DNA-dependent RNA polymerase catalyzes the transcription of DNA into RNA using the four ribonucleoside triphosphates as substrates. This chain is DNA-directed RNA polymerase subunit alpha, found in Dioscorea elephantipes (Elephant's foot yam).